The chain runs to 406 residues: Prenyltransferase phqJ (406 aa).

Polar residues predominate over residues 1–19; it reads MTVSTESNFPHGASTQKPQ. Residues 1–23 form a disordered region; sequence MTVSTESNFPHGASTQKPQSAEP. Glu-99 contacts brevianamide F. Positions 113, 200, and 202 each coordinate dimethylallyl diphosphate. Tyr-204 contacts brevianamide F. Dimethylallyl diphosphate is bound by residues Lys-269, Tyr-271, and Tyr-340.

It belongs to the tryptophan dimethylallyltransferase family.

It participates in alkaloid biosynthesis. In terms of biological role, prenyltransferase; part of the gene cluster that mediates the biosynthesis of paraherquamide, a fungal indole alkaloid that belongs to a family of natural products containing a characteristic bicyclo[2.2.2]diazaoctane core. The first steps in the biosynthesis of paraherquamide is the production of the beta-methyl-proline precursor from L-isoleucine. They require oxidation of a terminally hydroxylated L-isoleucine to the corresponding aldehyde by enzymes which have still to be identified. Spontaneous cyclization and dehydration would yield the 4-methyl pyrolline-5-carboxylic acid, which is then reduced by the pyrroline-5-carboxylate reductase phqD leading to the beta-methyl-proline precursor. The next step of paraherquamide biosynthesis involves coupling of beta-methyl-proline and L-tryptophan by the bimodular NRPS phqB, to produce a monooxopiperazine intermediate. The reductase (R) domain of phqB utilizes NADPH for hydride transfer to reduce the thioester bond of the T domain-tethered linear dipeptide to a hemithioaminal intermediate, which spontaneously cleaves the C-S bond to release the aldehyde product. This compound undergoes spontaneous cyclization and dehydration to give a dienamine which is reverse prenylated at C-2 by the reverse prenyltransferase phqJ. The other prenyltransferase present in the cluster, phqI may be a redundant gene in the pathway. During biosynthetic assembly, the key step to produce the polycyclic core is catalyzed by the bifunctional reductase and intramolecular [4+2] Diels-Alderase, phqE, resulting in formation of the [2.2.2] diazaoctane intermediate preparaherquamide. Following formation of preparaherquamide, an indole 2,3-epoxidation-initiated pinacol-like rearrangement is catalyzed by the phqK FAD-dependent monooxygenase. The prenyltransferase phqA, the cytochrome P450 monooxygenase phqL, and the FAD-linked oxidoreductase phqH (or the cytochrome P450 monooxygenase phqM), are proposed to be involved in the formation of the pyran ring. The FAD-dependent monooxygenase phqK is likely responsible for generation of the spiro-oxindole, and the N-methylation is likely mediated by the phqN methyltransferase leading to the isolable natural product paraherquamide F. However, the order of these biosynthetic steps has still to be determined. In late-stage paraherquamide biosynthesis, the third P450 monooxygenase, phqO, is probably responsible for the C-14 hydroxylation, transforming paraherquamide F to paraherquamide G, and paraherquamide E to the final product paraherquamide A. The expansion from the 6-membered ring pyran (in paraherquamides F and G) to the 7-membered dioxepin ring (in paraherquamides A and E) represents a poorly understood but intriguing process that probably involves the 2-oxoglutarate-dependent dioxygenase phqC. Finally, the remaining members of the paraherquamide cluster, including phqI as well as phqM (or phqH), do not have a clearly prescribed role and appear to be redundant. In Penicillium fellutanum, this protein is Prenyltransferase phqJ.